Consider the following 557-residue polypeptide: 6-methylpretetramide 4-monooxygenase (557 aa).

Residues 9–38 and 278–288 each bind FAD; these read QVLI…VIDR and MRSGRCFVAGD. Residues 530-557 form a disordered region; it reads LPEDTAPGAGDSAGRPAPDGTRRGVTTE.

It belongs to the PheA/TfdB FAD monooxygenase family. FAD serves as cofactor.

It catalyses the reaction 6-methylpretetramide + NADPH + O2 + 2 H(+) = 4-hydroxy-6-methylpretetramide + NADP(+) + H2O. It carries out the reaction 4-hydroxy-6-methylpretetramide + NADPH + O2 = 4-dedimethylamino-4-oxo-anhydrotetracycline + NADP(+) + H2O. It functions in the pathway antibiotic biosynthesis; oxytetracycline biosynthesis. Its function is as follows. Involved in the biosynthesis of the tetracycline antibiotic, oxytetracycline. Catalyzes the double hydroxylation of 6-methylpretetramide to yield 4-keto-anhydrotetracycline, via the insertion of oxygen atoms at the C-12a and C-4 positions of 6-pretetramid. The chain is 6-methylpretetramide 4-monooxygenase from Streptomyces rimosus.